The primary structure comprises 444 residues: Enolase 1 (444 aa).

Residues H165 and E174 each contribute to the substrate site. E217 functions as the Proton donor in the catalytic mechanism. Substrate contacts are provided by E303 and D330. K355 functions as the Proton acceptor in the catalytic mechanism. Residues 382 to 385 (SHRS) and K406 each bind substrate.

Belongs to the enolase family. In terms of assembly, homodimer. It depends on Mg(2+) as a cofactor.

Its subcellular location is the cytoplasm. The enzyme catalyses (2R)-2-phosphoglycerate = phosphoenolpyruvate + H2O. It functions in the pathway carbohydrate degradation; glycolysis; pyruvate from D-glyceraldehyde 3-phosphate: step 4/5. This Toxoplasma gondii protein is Enolase 1 (ENO1).